The following is a 342-amino-acid chain: Tetraacyldisaccharide 4'-kinase (342 aa).

68–75 (TVGGTGKT) contacts ATP.

It belongs to the LpxK family.

It catalyses the reaction a lipid A disaccharide + ATP = a lipid IVA + ADP + H(+). The protein operates within glycolipid biosynthesis; lipid IV(A) biosynthesis; lipid IV(A) from (3R)-3-hydroxytetradecanoyl-[acyl-carrier-protein] and UDP-N-acetyl-alpha-D-glucosamine: step 6/6. Functionally, transfers the gamma-phosphate of ATP to the 4'-position of a tetraacyldisaccharide 1-phosphate intermediate (termed DS-1-P) to form tetraacyldisaccharide 1,4'-bis-phosphate (lipid IVA). The polypeptide is Tetraacyldisaccharide 4'-kinase (Burkholderia ambifaria (strain MC40-6)).